The chain runs to 155 residues: RNA pyrophosphohydrolase (155 aa).

The Nudix hydrolase domain maps to 5–147 (KYRPNVAAII…KRQVYRQVIA (143 aa)). The Nudix box motif lies at 42-63 (GGIDEGETPLEALHRELLEEIG).

The protein belongs to the Nudix hydrolase family. RppH subfamily. The cofactor is a divalent metal cation.

In terms of biological role, accelerates the degradation of transcripts by removing pyrophosphate from the 5'-end of triphosphorylated RNA, leading to a more labile monophosphorylated state that can stimulate subsequent ribonuclease cleavage. The sequence is that of RNA pyrophosphohydrolase from Helicobacter pylori (strain HPAG1).